The primary structure comprises 106 residues: MKPYAIIQTGNKQYQVSEGDVIDVELLDGVSEGQEVVFEQVLFTFDGSKASLGTPTVSNAVVKGEMLSRVRGEKVIAYKYKRRKNYHRKTGHRQNYLRVKISNLVM.

This sequence belongs to the bacterial ribosomal protein bL21 family. In terms of assembly, part of the 50S ribosomal subunit. Contacts protein L20.

In terms of biological role, this protein binds to 23S rRNA in the presence of protein L20. In Chlamydia felis (strain Fe/C-56) (Chlamydophila felis), this protein is Large ribosomal subunit protein bL21.